The chain runs to 82 residues: Hepcidin (82 aa).

Residues 1–23 (MALSVQIRAACLLLLLLVSLTAG) form the signal peptide. A propeptide spanning residues 24–53 (SVLPSQTRQLTDLRTQDTAGATAGLTPVAQ) is cleaved from the precursor. Cystine bridges form between Cys-64/Cys-80, Cys-67/Cys-70, Cys-68/Cys-76, and Cys-71/Cys-79.

Belongs to the hepcidin family. Interacts with SLC40A1; this interaction promotes SLC40A1 rapid ubiquitination.

It is found in the secreted. Liver-produced hormone that constitutes the main circulating regulator of iron absorption and distribution across tissues. Acts by promoting endocytosis and degradation of ferroportin/SLC40A1, leading to the retention of iron in iron-exporting cells and decreased flow of iron into plasma. Controls the major flows of iron into plasma: absorption of dietary iron in the intestine, recycling of iron by macrophages, which phagocytose old erythrocytes and other cells, and mobilization of stored iron from hepatocytes. Its function is as follows. Has strong antimicrobial activity against E.coli ML35P N.cinerea and weaker against S.epidermidis, S.aureus and group b streptococcus bacteria. Active against the fungus C.albicans. No activity against P.aeruginosa. This is Hepcidin (HAMP) from Sus scrofa (Pig).